The following is a 96-amino-acid chain: UPF0235 protein Spro_4033 (96 aa).

It belongs to the UPF0235 family.

The protein is UPF0235 protein Spro_4033 of Serratia proteamaculans (strain 568).